Here is a 531-residue protein sequence, read N- to C-terminus: Methyl-accepting chemotaxis protein McpN (531 aa).

The Cytoplasmic segment spans residues 1–24 (MNESVARVFDRILRGLGLKTLNAQ). The chain crosses the membrane as a helical span at residues 25–45 (FLLSYALMFGLAACASVALYL). At 46–174 (SMSISPETIN…LMSARADSVQ (129 aa)) the chain is on the periplasmic side. Residues 52–140 (ETINVAGAQR…AMLDQVAQPA (89 aa)) form a pilJ-type region. Positions 54-65 (INVAGAQRMLSQ) match the N-box motif. Arg-61 contributes to the nitrate binding site. A helical transmembrane segment spans residues 175–195 (HTQMWIAFGCLLAILVLVVLG). At 196 to 531 (RQFGLAPLMR…LRVVLGRFRT (336 aa)) the chain is on the cytoplasmic side. The HAMP domain maps to 201–254 (APLMRQLRGLEVALTEVGAANFTHALAAGHADNEIGRIVAGYERMRQDVSGLLA). The 237-residue stretch at 259–495 (SAAETDKDVA…DIDRNITNVS (237 aa)) folds into the Methyl-accepting transducer domain.

The protein belongs to the methyl-accepting chemotaxis (MCP) protein family. Ligand free ligand-binding domain (LBD) is present in a monomer-dimer equilibrium. Nitrate binding to the periplasmic LBD stabilizes the homodimer.

It is found in the cell inner membrane. Its function is as follows. Chemotactic-signal transducers respond to changes in the concentration of attractants and repellents in the environment, transduce a signal from the outside to the inside of the cell, and facilitate sensory adaptation through the variation of the level of methylation. McpN is a chemoreceptor that recognizes specifically nitrate and mediates chemoattraction. Binds nitrate specifically and shows no affinity for other ligands such as nitrite. McpN-mediated taxis occurs only under nitrate starvation conditions. This chain is Methyl-accepting chemotaxis protein McpN, found in Pseudomonas aeruginosa (strain ATCC 15692 / DSM 22644 / CIP 104116 / JCM 14847 / LMG 12228 / 1C / PRS 101 / PAO1).